Reading from the N-terminus, the 84-residue chain is Toxin NvePTx1 (84 aa).

A signal peptide spans 1–21; it reads MFSARLVLVFAVVLCIQLCNA. The propeptide occupies 22 to 34; sequence SWLDERAMTQEKR.

Belongs to the sea anemone type 5 potassium channel toxin family. In terms of processing, contains 4 disulfide bonds. In unfertilized eggs and early post-fertilization stages, is expressed uniformly. In gastrulae, the expression becomes spatially-localized and seems to be absent from the oral and aboral poles. In planulae, the expression is clearly observed in the ectoderm in packed gland cells absent from the two body poles, and upon metamorphosis, the expression diminishes. There is two types of gland cells, one large and elongated and another small and round. This toxin is maternally deposited at both protein and RNA levels.

The protein localises to the secreted. It is found in the nematocyst. In terms of biological role, neurotoxin that is probably only defensive. Acts as a voltage-gated potassium channel (Kv) inhibitor. In vivo, induces a rapid increase in swimming speed on zebrafish larvae, as well as death which occurs between 2 and 18 hours later. This is Toxin NvePTx1 from Nematostella vectensis (Starlet sea anemone).